Reading from the N-terminus, the 549-residue chain is Siroheme synthase (549 aa).

The tract at residues 1 to 203 (MNTFPLFFKL…GNENEALAQL (203 aa)) is precorrin-2 dehydrogenase /sirohydrochlorin ferrochelatase. NAD(+) contacts are provided by residues 22–23 (DV) and 43–44 (PS). Ser-128 carries the post-translational modification Phosphoserine. Positions 247–549 (GEVYIVGAGP…DGDLEQLIIG (303 aa)) are uroporphyrinogen-III C-methyltransferase. Pro-256 lines the S-adenosyl-L-methionine pocket. The active-site Proton acceptor is Asp-279. The active-site Proton donor is Lys-301. Residues 332 to 334 (GGD), Ile-337, 362 to 363 (TA), Met-414, and Ala-443 contribute to the S-adenosyl-L-methionine site.

In the N-terminal section; belongs to the precorrin-2 dehydrogenase / sirohydrochlorin ferrochelatase family. It in the C-terminal section; belongs to the precorrin methyltransferase family.

It catalyses the reaction uroporphyrinogen III + 2 S-adenosyl-L-methionine = precorrin-2 + 2 S-adenosyl-L-homocysteine + H(+). The enzyme catalyses precorrin-2 + NAD(+) = sirohydrochlorin + NADH + 2 H(+). It carries out the reaction siroheme + 2 H(+) = sirohydrochlorin + Fe(2+). It functions in the pathway cofactor biosynthesis; adenosylcobalamin biosynthesis; precorrin-2 from uroporphyrinogen III: step 1/1. It participates in cofactor biosynthesis; adenosylcobalamin biosynthesis; sirohydrochlorin from precorrin-2: step 1/1. Its pathway is porphyrin-containing compound metabolism; siroheme biosynthesis; precorrin-2 from uroporphyrinogen III: step 1/1. The protein operates within porphyrin-containing compound metabolism; siroheme biosynthesis; siroheme from sirohydrochlorin: step 1/1. It functions in the pathway porphyrin-containing compound metabolism; siroheme biosynthesis; sirohydrochlorin from precorrin-2: step 1/1. Multifunctional enzyme that catalyzes the SAM-dependent methylations of uroporphyrinogen III at position C-2 and C-7 to form precorrin-2 via precorrin-1. Then it catalyzes the NAD-dependent ring dehydrogenation of precorrin-2 to yield sirohydrochlorin. Finally, it catalyzes the ferrochelation of sirohydrochlorin to yield siroheme. The chain is Siroheme synthase from Psychrobacter arcticus (strain DSM 17307 / VKM B-2377 / 273-4).